A 269-amino-acid polypeptide reads, in one-letter code: 3-methyl-2-oxobutanoate hydroxymethyltransferase (269 aa).

2 residues coordinate Mg(2+): aspartate 50 and aspartate 89. Residues 50–51 (DS), aspartate 89, and lysine 118 each bind 3-methyl-2-oxobutanoate. Glutamate 120 provides a ligand contact to Mg(2+). Glutamate 187 serves as the catalytic Proton acceptor.

It belongs to the PanB family. Homodecamer; pentamer of dimers. The cofactor is Mg(2+).

It localises to the cytoplasm. The catalysed reaction is 3-methyl-2-oxobutanoate + (6R)-5,10-methylene-5,6,7,8-tetrahydrofolate + H2O = 2-dehydropantoate + (6S)-5,6,7,8-tetrahydrofolate. It participates in cofactor biosynthesis; (R)-pantothenate biosynthesis; (R)-pantoate from 3-methyl-2-oxobutanoate: step 1/2. Catalyzes the reversible reaction in which hydroxymethyl group from 5,10-methylenetetrahydrofolate is transferred onto alpha-ketoisovalerate to form ketopantoate. This is 3-methyl-2-oxobutanoate hydroxymethyltransferase from Aliarcobacter butzleri (strain RM4018) (Arcobacter butzleri).